The sequence spans 358 residues: Peptide chain release factor 1 (358 aa).

Q232 carries the post-translational modification N5-methylglutamine.

The protein belongs to the prokaryotic/mitochondrial release factor family. In terms of processing, methylated by PrmC. Methylation increases the termination efficiency of RF1.

The protein localises to the cytoplasm. Its function is as follows. Peptide chain release factor 1 directs the termination of translation in response to the peptide chain termination codons UAG and UAA. In Acidobacterium capsulatum (strain ATCC 51196 / DSM 11244 / BCRC 80197 / JCM 7670 / NBRC 15755 / NCIMB 13165 / 161), this protein is Peptide chain release factor 1.